We begin with the raw amino-acid sequence, 2040 residues long: Apolipoprotein(a) (2040 aa).

A signal peptide spans 1 to 19; it reads MEHKEVVLLLLLFLKSAAP. Kringle domains are found at residues 27–105, 141–219, 255–333, 369–447, 483–561, 597–675, 711–789, 825–903, 939–1017, and 1053–1131; these read DCYH…LTQC, ECYH…LTQC, ECYH…LTRC, and DCYY…LTQC. 30 disulfides stabilise this stretch: Cys28/Cys105, Cys49/Cys88, Cys77/Cys100, Cys142/Cys219, Cys163/Cys202, Cys191/Cys214, Cys256/Cys333, Cys277/Cys316, Cys305/Cys328, Cys370/Cys447, Cys391/Cys430, Cys419/Cys442, Cys484/Cys561, Cys505/Cys544, Cys533/Cys556, Cys598/Cys675, Cys619/Cys658, Cys647/Cys670, Cys712/Cys789, Cys733/Cys772, Cys761/Cys784, Cys826/Cys903, Cys847/Cys886, Cys875/Cys898, Cys940/Cys1017, Cys961/Cys1000, Cys989/Cys1012, Cys1054/Cys1131, Cys1075/Cys1114, and Cys1103/Cys1126. A glycan (N-linked (GlcNAc...) asparagine) is linked at Asn61. An N-linked (GlcNAc...) asparagine glycan is attached at Asn101. A glycan (N-linked (GlcNAc...) asparagine) is linked at Asn215. Asn329 carries an N-linked (GlcNAc...) asparagine glycan. N-linked (GlcNAc...) asparagine glycosylation occurs at Asn443. N-linked (GlcNAc...) asparagine glycosylation occurs at Asn557. Asn671 carries N-linked (GlcNAc...) asparagine glycosylation. Asn785 carries N-linked (GlcNAc...) asparagine glycosylation. Residue Asn899 is glycosylated (N-linked (GlcNAc...) asparagine). N-linked (GlcNAc...) asparagine glycosylation occurs at Asn1013. Residue Asn1127 is glycosylated (N-linked (GlcNAc...) asparagine). Residues 1147-1166 are disordered; it reads DPSTEASSEEAPTEQSPGVQ. Kringle domains follow at residues 1167–1245 and 1273–1351; these read DCYH…LTQC. 6 cysteine pairs are disulfide-bonded: Cys1168–Cys1245, Cys1189–Cys1228, Cys1217–Cys1240, Cys1274–Cys1351, Cys1295–Cys1334, and Cys1323–Cys1346. Asn1241 is a glycosylation site (N-linked (GlcNAc...) asparagine). N-linked (GlcNAc...) asparagine glycans are attached at residues Asn1347 and Asn1381. Residues 1365-1388 are disordered; that stretch reads VPVPSTELPSEEAPTENSTGVQDC. The Kringle 13 domain maps to 1387 to 1465; sequence DCYRGDGQSY…RWEYCNLTRC (79 aa). 3 cysteine pairs are disulfide-bonded: Cys1388/Cys1465, Cys1409/Cys1448, and Cys1437/Cys1460. N-linked (GlcNAc...) asparagine glycosylation occurs at Asn1461. The interval 1476–1497 is disordered; sequence PTVAPVPSTEAPSEQAPPEKSP. 3 Kringle domains span residues 1501–1579, 1615–1693, and 1719–1799; these read DCYH…LTQC, QCYH…LTRC, and DCMF…IPLC. Cystine bridges form between Cys1502/Cys1579, Cys1523/Cys1562, Cys1551/Cys1574, Cys1616/Cys1693, Cys1637/Cys1676, Cys1665/Cys1688, Cys1720/Cys1799, Cys1741/Cys1782, Cys1770/Cys1794, and Cys1846/Cys1862. A glycan (N-linked (GlcNAc...) asparagine) is linked at Asn1575. N-linked (GlcNAc...) asparagine glycosylation occurs at Asn1689. The Peptidase S1 domain occupies 1820-2038; that stretch reads IVGGCVAHPH…FVTWIEGMMR (219 aa). Residues His1861 and Asp1904 each act as charge relay system in the active site. Cystine bridges form between Cys1938/Cys1996, Cys1968/Cys1975, and Cys1986/Cys2014. Ser1990 functions as the Charge relay system in the catalytic mechanism.

Belongs to the peptidase S1 family. Plasminogen subfamily. Disulfide-linked to apo-B100. Binds to fibronectin and decorin. N- and O-glycosylated. The N-glycans are complex biantennary structures present in either a mono- or disialylated state. The O-glycans are mostly (80%) represented by the monosialylated core type I structure, NeuNAcalpha2-3Galbeta1-3GalNAc, with smaller amounts of disialylated and non-sialylated O-glycans also detected.

Apo(a) is the main constituent of lipoprotein(a) (Lp(a)). It has serine proteinase activity and is able of autoproteolysis. Inhibits tissue-type plasminogen activator 1. Lp(a) may be a ligand for megalin/Gp 330. The chain is Apolipoprotein(a) (LPA) from Homo sapiens (Human).